Reading from the N-terminus, the 259-residue chain is Phosphate import ATP-binding protein PstB 1 (259 aa).

One can recognise an ABC transporter domain in the interval Val-7–Ile-254. An ATP-binding site is contributed by Gly-45 to Ser-52.

Belongs to the ABC transporter superfamily. Phosphate importer (TC 3.A.1.7) family. In terms of assembly, the complex is composed of two ATP-binding proteins (PstB), two transmembrane proteins (PstC and PstA) and a solute-binding protein (PstS).

It localises to the cell membrane. The catalysed reaction is phosphate(out) + ATP + H2O = ADP + 2 phosphate(in) + H(+). Functionally, part of the ABC transporter complex PstSACB involved in phosphate import. Responsible for energy coupling to the transport system. In Bacillus licheniformis (strain ATCC 14580 / DSM 13 / JCM 2505 / CCUG 7422 / NBRC 12200 / NCIMB 9375 / NCTC 10341 / NRRL NRS-1264 / Gibson 46), this protein is Phosphate import ATP-binding protein PstB 1.